Consider the following 147-residue polypeptide: Hemoglobin anodic subunit beta (147 aa).

One can recognise a Globin domain in the interval glutamate 2 to histidine 147. Histidine 63 and histidine 92 together coordinate heme b.

This sequence belongs to the globin family. As to quaternary structure, heterotetramer of two alpha chains and two beta chains. Red blood cells.

Involved in oxygen transport from gills to the various peripheral tissues. The polypeptide is Hemoglobin anodic subunit beta (hbb1) (Anguilla anguilla (European freshwater eel)).